We begin with the raw amino-acid sequence, 116 residues long: Putative oxygen-evolving enhancer protein 1 (116 aa).

It belongs to the PsbO family.

The protein localises to the plastid. Its subcellular location is the chloroplast thylakoid membrane. Stabilizes the manganese cluster which is the primary site of water splitting. In Pinus strobus (Eastern white pine), this protein is Putative oxygen-evolving enhancer protein 1.